Here is a 500-residue protein sequence, read N- to C-terminus: Catalase (500 aa).

Residues H59 and N131 contribute to the active site. Y339 provides a ligand contact to heme.

It belongs to the catalase family. It depends on heme as a cofactor.

The catalysed reaction is 2 H2O2 = O2 + 2 H2O. In terms of biological role, decomposes hydrogen peroxide into water and oxygen; serves to protect cells from the toxic effects of hydrogen peroxide. The polypeptide is Catalase (katA) (Neisseria gonorrhoeae).